Consider the following 121-residue polypeptide: UPF0212 protein VNG_0879C (121 aa).

Belongs to the UPF0212 family.

This Halobacterium salinarum (strain ATCC 700922 / JCM 11081 / NRC-1) (Halobacterium halobium) protein is UPF0212 protein VNG_0879C.